Reading from the N-terminus, the 317-residue chain is Acetyl-coenzyme A carboxylase carboxyl transferase subunit alpha (317 aa).

Positions 40–293 constitute a CoA carboxyltransferase C-terminal domain; the sequence is LEVRVREAIV…GDVIANALGE (254 aa).

This sequence belongs to the AccA family. In terms of assembly, acetyl-CoA carboxylase is a heterohexamer composed of biotin carboxyl carrier protein (AccB), biotin carboxylase (AccC) and two subunits each of ACCase subunit alpha (AccA) and ACCase subunit beta (AccD).

The protein resides in the cytoplasm. The enzyme catalyses N(6)-carboxybiotinyl-L-lysyl-[protein] + acetyl-CoA = N(6)-biotinyl-L-lysyl-[protein] + malonyl-CoA. Its pathway is lipid metabolism; malonyl-CoA biosynthesis; malonyl-CoA from acetyl-CoA: step 1/1. In terms of biological role, component of the acetyl coenzyme A carboxylase (ACC) complex. First, biotin carboxylase catalyzes the carboxylation of biotin on its carrier protein (BCCP) and then the CO(2) group is transferred by the carboxyltransferase to acetyl-CoA to form malonyl-CoA. This chain is Acetyl-coenzyme A carboxylase carboxyl transferase subunit alpha, found in Rhizobium etli (strain ATCC 51251 / DSM 11541 / JCM 21823 / NBRC 15573 / CFN 42).